A 190-amino-acid polypeptide reads, in one-letter code: Threonylcarbamoyl-AMP synthase (190 aa).

The 181-residue stretch at 10 to 190 folds into the YrdC-like domain; sequence PQDKESVYRH…DWHSRQVIRA (181 aa).

Belongs to the SUA5 family. TsaC subfamily.

The protein localises to the cytoplasm. It carries out the reaction L-threonine + hydrogencarbonate + ATP = L-threonylcarbamoyladenylate + diphosphate + H2O. Required for the formation of a threonylcarbamoyl group on adenosine at position 37 (t(6)A37) in tRNAs that read codons beginning with adenine. Catalyzes the conversion of L-threonine, HCO(3)(-)/CO(2) and ATP to give threonylcarbamoyl-AMP (TC-AMP) as the acyladenylate intermediate, with the release of diphosphate. The polypeptide is Threonylcarbamoyl-AMP synthase (Dichelobacter nodosus (strain VCS1703A)).